The chain runs to 1067 residues: Carbamoyl phosphate synthase large chain (1067 aa).

The tract at residues 1–401 is carboxyphosphate synthetic domain; sequence MPLNKDIKKV…AFLKGIRSLE (401 aa). Residues arginine 129, arginine 169, glycine 175, glycine 176, lysine 208, valine 210, glutamate 215, glycine 241, isoleucine 242, histidine 243, glutamine 284, and glutamate 298 each contribute to the ATP site. The ATP-grasp 1 domain occupies 133–327; the sequence is RDMMNRINQP…IAKVAAKIAL (195 aa). The Mg(2+) site is built by glutamine 284, glutamate 298, and asparagine 300. Residues glutamine 284, glutamate 298, and asparagine 300 each coordinate Mn(2+). Residues 402 to 549 form an oligomerization domain region; sequence IGKYSLEHKK…YSTYEQYDEV (148 aa). The tract at residues 550 to 932 is carbamoyl phosphate synthetic domain; the sequence is VVSDNKKVVV…ALYKGFVGAS (383 aa). One can recognise an ATP-grasp 2 domain in the interval 674–864; sequence DDLLERLNIA…IVDIATRIML (191 aa). Positions 710, 749, 751, 755, 780, 781, 782, 783, 823, and 835 each coordinate ATP. Glutamine 823, glutamate 835, and asparagine 837 together coordinate Mg(2+). Mn(2+)-binding residues include glutamine 823, glutamate 835, and asparagine 837. The MGS-like domain occupies 933-1067; it reads MYTGDKGKTI…NRELEVFNLI (135 aa). Positions 933–1067 are allosteric domain; the sequence is MYTGDKGKTI…NRELEVFNLI (135 aa).

Belongs to the CarB family. As to quaternary structure, composed of two chains; the small (or glutamine) chain promotes the hydrolysis of glutamine to ammonia, which is used by the large (or ammonia) chain to synthesize carbamoyl phosphate. Tetramer of heterodimers (alpha,beta)4. The cofactor is Mg(2+). Mn(2+) serves as cofactor.

The enzyme catalyses hydrogencarbonate + L-glutamine + 2 ATP + H2O = carbamoyl phosphate + L-glutamate + 2 ADP + phosphate + 2 H(+). It carries out the reaction hydrogencarbonate + NH4(+) + 2 ATP = carbamoyl phosphate + 2 ADP + phosphate + 2 H(+). Its pathway is amino-acid biosynthesis; L-arginine biosynthesis; carbamoyl phosphate from bicarbonate: step 1/1. The protein operates within pyrimidine metabolism; UMP biosynthesis via de novo pathway; (S)-dihydroorotate from bicarbonate: step 1/3. Large subunit of the glutamine-dependent carbamoyl phosphate synthetase (CPSase). CPSase catalyzes the formation of carbamoyl phosphate from the ammonia moiety of glutamine, carbonate, and phosphate donated by ATP, constituting the first step of 2 biosynthetic pathways, one leading to arginine and/or urea and the other to pyrimidine nucleotides. The large subunit (synthetase) binds the substrates ammonia (free or transferred from glutamine from the small subunit), hydrogencarbonate and ATP and carries out an ATP-coupled ligase reaction, activating hydrogencarbonate by forming carboxy phosphate which reacts with ammonia to form carbamoyl phosphate. The protein is Carbamoyl phosphate synthase large chain of Clostridium perfringens (strain SM101 / Type A).